Here is a 342-residue protein sequence, read N- to C-terminus: Ferredoxin--NADP reductase (342 aa).

FAD is bound by residues Cys-17, Asp-36, Gln-44, Tyr-49, Ile-89, Phe-124, Asp-289, and Thr-330.

This sequence belongs to the ferredoxin--NADP reductase type 2 family. Homodimer. FAD serves as cofactor.

The catalysed reaction is 2 reduced [2Fe-2S]-[ferredoxin] + NADP(+) + H(+) = 2 oxidized [2Fe-2S]-[ferredoxin] + NADPH. The sequence is that of Ferredoxin--NADP reductase from Rhodopseudomonas palustris (strain HaA2).